The primary structure comprises 421 residues: Histidine--tRNA ligase (421 aa).

This sequence belongs to the class-II aminoacyl-tRNA synthetase family. As to quaternary structure, homodimer.

Its subcellular location is the cytoplasm. The enzyme catalyses tRNA(His) + L-histidine + ATP = L-histidyl-tRNA(His) + AMP + diphosphate + H(+). The sequence is that of Histidine--tRNA ligase from Alkaliphilus oremlandii (strain OhILAs) (Clostridium oremlandii (strain OhILAs)).